Consider the following 136-residue polypeptide: uncharacterized protein (136 aa).

Residues 19–39 (LGFPLGTALLLIIIFSLSGIF) traverse the membrane as a helical segment. Disordered regions lie at residues 54–87 (SLAN…LSVP) and 112–136 (KLTV…VPLY).

The protein localises to the membrane. This is an uncharacterized protein from Arabidopsis thaliana (Mouse-ear cress).